A 651-amino-acid polypeptide reads, in one-letter code: Acetyl-coenzyme A synthetase (651 aa).

Residues 189-192 (RGGK), T311, and N335 contribute to the CoA site. ATP is bound by residues 387 to 389 (GEP), 411 to 416 (DTWWQT), D500, and R515. Position 523 (S523) interacts with CoA. ATP is bound at residue R526. Mg(2+) contacts are provided by V537, H539, and V542. Residue R584 coordinates CoA. K609 is modified (N6-acetyllysine).

It belongs to the ATP-dependent AMP-binding enzyme family. Requires Mg(2+) as cofactor. Post-translationally, acetylated. Deacetylation by the SIR2-homolog deacetylase activates the enzyme.

The catalysed reaction is acetate + ATP + CoA = acetyl-CoA + AMP + diphosphate. In terms of biological role, catalyzes the conversion of acetate into acetyl-CoA (AcCoA), an essential intermediate at the junction of anabolic and catabolic pathways. AcsA undergoes a two-step reaction. In the first half reaction, AcsA combines acetate with ATP to form acetyl-adenylate (AcAMP) intermediate. In the second half reaction, it can then transfer the acetyl group from AcAMP to the sulfhydryl group of CoA, forming the product AcCoA. This is Acetyl-coenzyme A synthetase from Allorhizobium ampelinum (strain ATCC BAA-846 / DSM 112012 / S4) (Agrobacterium vitis (strain S4)).